The following is a 326-amino-acid chain: Putative UPF0725 protein At1g28500 (326 aa).

Residues 301–320 (KDTEQRSKTRQSEEKVESSQ) are compositionally biased toward basic and acidic residues. Residues 301–326 (KDTEQRSKTRQSEEKVESSQKRSRLC) form a disordered region.

The protein belongs to the UPF0725 (EMB2204) family.

In Arabidopsis thaliana (Mouse-ear cress), this protein is Putative UPF0725 protein At1g28500.